The primary structure comprises 287 residues: MKTRPMKSDWIATARTLSEAVPFLRRYDDAIVVIKFGGHAMGDAEAMASFARDIVLMRQVGVNPVIVHGGGPMINAMLAKLDINSDFVNGKRVTDAATIEVVEMVLSGLVNKRIVQAINREGGRAIGLSGKDANLIVCDPADPALGFVGEPVEVTPDTLLQLVRSEIIPVIAPIGTGREGETFNINGDTAAGAIAAALKADRLLLLTDVSGVKDAQGKVVTELTVENIEEMTAAGVIAGGMIPKTETCVTAIRGGVRAAVILDGRAPNACLLELFTEHGAGSIIRRG.

Residues 70–71, arginine 92, and asparagine 184 contribute to the substrate site; that span reads GG.

Belongs to the acetylglutamate kinase family. ArgB subfamily.

It localises to the cytoplasm. It carries out the reaction N-acetyl-L-glutamate + ATP = N-acetyl-L-glutamyl 5-phosphate + ADP. It functions in the pathway amino-acid biosynthesis; L-arginine biosynthesis; N(2)-acetyl-L-ornithine from L-glutamate: step 2/4. Functionally, catalyzes the ATP-dependent phosphorylation of N-acetyl-L-glutamate. The sequence is that of Acetylglutamate kinase from Dinoroseobacter shibae (strain DSM 16493 / NCIMB 14021 / DFL 12).